A 287-amino-acid polypeptide reads, in one-letter code: MDRISSPKKTKEIVQKYEFKFSKSLGQNFLIDQNILDNIVDGANVSEGDCIIEVGPGIGSLTQNIAERADSVLAVEIDKTLIPILKETLGAYPNVEVINEDVLKLDLHKLIEEKFPGRNVKVIANLPYYVTTPIIMKFLEEKVPVKSLTIMIQKEVADRMQAGPGTKDYGALSIAVQYYSNPKILLKVPPSVFIPQPKVESTVIRLDILDTPKVSVEREDLFFSLVKDAFGKRRKTLLNALSTGDLKLEKSLLREVLAASNIDENRRGETLTIEEYGVLANNLAKKL.

S-adenosyl-L-methionine contacts are provided by Asn28, Leu30, Gly55, Glu76, Asp101, and Asn125.

The protein belongs to the class I-like SAM-binding methyltransferase superfamily. rRNA adenine N(6)-methyltransferase family. RsmA subfamily.

Its subcellular location is the cytoplasm. The enzyme catalyses adenosine(1518)/adenosine(1519) in 16S rRNA + 4 S-adenosyl-L-methionine = N(6)-dimethyladenosine(1518)/N(6)-dimethyladenosine(1519) in 16S rRNA + 4 S-adenosyl-L-homocysteine + 4 H(+). Its function is as follows. Specifically dimethylates two adjacent adenosines (A1518 and A1519) in the loop of a conserved hairpin near the 3'-end of 16S rRNA in the 30S particle. May play a critical role in biogenesis of 30S subunits. The polypeptide is Ribosomal RNA small subunit methyltransferase A (Alkaliphilus oremlandii (strain OhILAs) (Clostridium oremlandii (strain OhILAs))).